The primary structure comprises 335 residues: Luciferase-like monooxygenase (335 aa).

To bacterial alkanal monooxygenase alpha and beta chains.

The sequence is that of Luciferase-like monooxygenase (yhbW) from Escherichia coli O6:H1 (strain CFT073 / ATCC 700928 / UPEC).